The primary structure comprises 150 residues: Catabolic 3-dehydroquinase 2 (150 aa).

The active-site Proton acceptor is the tyrosine 23. The substrate site is built by asparagine 74, histidine 80, and aspartate 87. Histidine 100 (proton donor) is an active-site residue. Residues 101-102 and arginine 111 each bind substrate; that span reads IT.

Belongs to the type-II 3-dehydroquinase family. In terms of assembly, homododecamer. Adopts a ring-like structure, composed of an arrangement of two hexameric rings stacked on top of one another.

It carries out the reaction 3-dehydroquinate = 3-dehydroshikimate + H2O. Its pathway is aromatic compound metabolism; 3,4-dihydroxybenzoate biosynthesis; 3,4-dihydroxybenzoate from 3-dehydroquinate: step 1/2. Its function is as follows. Is involved in the catabolism of quinate. Allows the utilization of quinate as carbon source via the beta-ketoadipate pathway. The protein is Catabolic 3-dehydroquinase 2 of Neosartorya fischeri (strain ATCC 1020 / DSM 3700 / CBS 544.65 / FGSC A1164 / JCM 1740 / NRRL 181 / WB 181) (Aspergillus fischerianus).